Consider the following 540-residue polypeptide: Lysosomal cobalamin transport escort protein LMBD1 (540 aa).

Residues 1 to 10 (MATPGAASAE) lie on the Extracellular side of the membrane. The helical transmembrane segment at 11-31 (LVIGWCIFGLLLLAILAFCWI) threads the bilayer. At 32-50 (YVRKYQSRRESEVVSTITA) the chain is on the cytoplasmic side. A helical transmembrane segment spans residues 51–71 (IFSLAIALITSALLPVDIFLV). Over 72-100 (SYMKNQNGTFKDWANANVSRQIEDTVLYG) the chain is Extracellular. Asparagine 78 and asparagine 88 each carry an N-linked (GlcNAc...) asparagine glycan. Residues 101 to 121 (YYTLYSVILFCVFFWIPFVYF) traverse the membrane as a helical segment. The Cytoplasmic portion of the chain corresponds to 122–144 (YYEEKDDDDTSKCTQIKTALKYT). Residues 145–165 (LGFVVICALLLLVGAFVPLNV) form a helical membrane-spanning segment. Residues 166-188 (PNNKNSTEWEKVKFLFEELGSSH) are Extracellular-facing. Residue asparagine 170 is glycosylated (N-linked (GlcNAc...) asparagine). A helical transmembrane segment spans residues 189 to 209 (GLAALSFSISSLTLIGMLAAI). Over 210–305 (TYTAYGMSAL…KFCGALRPLK (96 aa)) the chain is Cytoplasmic. The YERL motif; mediates interaction with adapter protein complex 2 and is essential for its function in clathrin-mediated endocytosis of INSR signature appears at 232 to 235 (YERL). Threonine 238 carries the post-translational modification Phosphothreonine. Residues 294-297 (WTKF) carry the WTKF motif; mediates interaction with adapter protein complex 2 and is essential for its function in clathrin-mediated endocytosis of INSR motif. A helical transmembrane segment spans residues 306–326 (IIWGIFFILVALLFVISLFLS). Over 327–364 (NLDKALHSAGIDSGFIIFGANLSNPLNMLLPLLQTVFP) the chain is Extracellular. Asparagine 347 carries an N-linked (GlcNAc...) asparagine glycan. A helical transmembrane segment spans residues 365-385 (LDYILITIIIMYFIFTSMAGI). The Cytoplasmic segment spans residues 386-408 (RNIGIWFFWIRLYKIRRGRTRPQ). A helical transmembrane segment spans residues 409-429 (ALLFLCMILLLIVLHTSYMIY). At 430–486 (SLAPQYVMYGSQNYLIETNITSDNHKGNSTLSVPKRCDADAPEDQCTVTRTYLFLHK) the chain is on the extracellular side. N-linked (GlcNAc...) asparagine glycosylation is found at asparagine 448 and asparagine 457. Residues 487–507 (FWFFSAAYYFGNWAFLGVFLI) form a helical membrane-spanning segment. Over 508 to 540 (GLIVSCCKGKKSVIEGVDEDSDISDDEPSVYSV) the chain is Cytoplasmic. A phosphoserine mark is found at serine 528 and serine 531.

It belongs to the LIMR family. LMBRD1 subfamily. As to quaternary structure, interacts with ABCD4; this interaction induces the translocation of ABCD4 from the endoplasmic reticulum to the lysosome. Interacts with ABCD4 and MMACHC; this interaction ensures the transport of cobalamin from the lysosome to the cytoplasm. Interacts with INSR, adapter protein complex 2 and clathrin heavy chain. Post-translationally, N-glycosylated.

It localises to the lysosome membrane. It is found in the cell membrane. Its subcellular location is the cytoplasmic vesicle. The protein resides in the clathrin-coated vesicle. Lysosomal membrane chaperone required to export cobalamin (vitamin B12) from lysosome to the cytosol, allowing its conversion to cofactors. Targets ABCD4 transporter from the endoplasmic reticulum to the lysosomal membrane. Then forms a complex with lysosomal transporter ABCD4 and cytoplasmic MMACHC to transport cobalamin across the lysosomal membrane. Acts as an adapter protein which plays an important role in mediating and regulating the internalization of the insulin receptor (INSR). Involved in clathrin-mediated endocytosis of INSR via its interaction with adapter protein complex 2. Essential for the initiation of gastrulation and early formation of mesoderm structures during embryogenesis. The chain is Lysosomal cobalamin transport escort protein LMBD1 (LMBRD1) from Macaca fascicularis (Crab-eating macaque).